A 395-amino-acid polypeptide reads, in one-letter code: Cytoplasmic tRNA 2-thiolation protein 1 (395 aa).

Residues 297 to 309 (TVAYKNKNKNKKK) are compositionally biased toward basic residues. Positions 297 to 335 (TVAYKNKNKNKKKSNSEQEEQEKQEQEVNPDGSISLNRN) are disordered.

It belongs to the TtcA family. CTU1/NCS6/ATPBD3 subfamily.

Its subcellular location is the cytoplasm. It participates in tRNA modification; 5-methoxycarbonylmethyl-2-thiouridine-tRNA biosynthesis. Its function is as follows. Plays a central role in 2-thiolation of mcm(5)S(2)U at tRNA wobble positions of tRNA(Lys), tRNA(Glu) and tRNA(Gln). Directly binds tRNAs and probably acts by catalyzing adenylation of tRNAs, an intermediate required for 2-thiolation. It is unclear whether it acts as a sulfurtransferase that transfers sulfur from thiocarboxylated URM1 onto the uridine of tRNAs at wobble position. Prior mcm(5) tRNA modification by the elongator complex is required for 2-thiolation. May also be involved in protein urmylation. The polypeptide is Cytoplasmic tRNA 2-thiolation protein 1 (Candida albicans (strain SC5314 / ATCC MYA-2876) (Yeast)).